A 360-amino-acid polypeptide reads, in one-letter code: Protein RecA (360 aa).

Gly66–Thr73 contacts ATP. The disordered stretch occupies residues Asp330–Lys360.

This sequence belongs to the RecA family.

The protein localises to the cytoplasm. Can catalyze the hydrolysis of ATP in the presence of single-stranded DNA, the ATP-dependent uptake of single-stranded DNA by duplex DNA, and the ATP-dependent hybridization of homologous single-stranded DNAs. It interacts with LexA causing its activation and leading to its autocatalytic cleavage. The sequence is that of Protein RecA from Lactobacillus johnsonii (strain CNCM I-12250 / La1 / NCC 533).